Reading from the N-terminus, the 199-residue chain is Fe/S biogenesis protein NfuA (199 aa).

Cys-151 and Cys-154 together coordinate [4Fe-4S] cluster.

Belongs to the NfuA family. In terms of assembly, homodimer. It depends on [4Fe-4S] cluster as a cofactor.

Involved in iron-sulfur cluster biogenesis. Binds a 4Fe-4S cluster, can transfer this cluster to apoproteins, and thereby intervenes in the maturation of Fe/S proteins. Could also act as a scaffold/chaperone for damaged Fe/S proteins. The protein is Fe/S biogenesis protein NfuA of Xanthomonas campestris pv. campestris (strain 8004).